Reading from the N-terminus, the 136-residue chain is UPF0216 protein PYRAB16100 (136 aa).

The protein belongs to the UPF0216 family.

The protein is UPF0216 protein PYRAB16100 of Pyrococcus abyssi (strain GE5 / Orsay).